A 441-amino-acid chain; its full sequence is Peroxisomal biogenesis factor 3 (441 aa).

At 1–17 the chain is on the peroxisomal side; sequence MAPNQRSRSLLQRHRGK. Residues 18–39 form a helical membrane-spanning segment; that stretch reads VLISLTGIAALFTTGSVVVFFV. Residues 40-441 lie on the Cytoplasmic side of the membrane; sequence KRWLYKQQLR…GVSSSFSFKP (402 aa).

It belongs to the peroxin-3 family. As to quaternary structure, interacts with MSP1; leading to inhibit the translocase activity of MSP1.

Its subcellular location is the peroxisome membrane. In terms of biological role, involved in peroxisome biosynthesis. Acts as a regulator of MSP1 by inhibiting the ability of MSP1 to unfold target proteins. This is Peroxisomal biogenesis factor 3 (PEX3) from Saccharomyces cerevisiae (strain ATCC 204508 / S288c) (Baker's yeast).